Consider the following 505-residue polypeptide: Cholesteryl ester transfer protein (505 aa).

The signal sequence occupies residues 1 to 24 (MLWAGGMRLGMARILLMLVHAAAA). 2 N-linked (GlcNAc...) asparagine glycosylation sites follow: Asn-68 and Asn-114. Cysteines 169 and 210 form a disulfide. N-linked (GlcNAc...) asparagine glycosylation is found at Asn-266, Asn-344, and Asn-422.

Belongs to the BPI/LBP/Plunc superfamily. BPI/LBP family. In terms of tissue distribution, highly expressed in liver brain, heart, and spleen. Secreted in plasma.

It is found in the secreted. It catalyses the reaction cholesteryl (9Z-octadecenoate)(in) = cholesteryl (9Z-octadecenoate)(out). It carries out the reaction 1,2,3-tri-(9Z-octadecenoyl)-glycerol(in) = 1,2,3-tri-(9Z-octadecenoyl)-glycerol(out). The enzyme catalyses cholesteryl (9Z,12Z)-octadecadienoate(in) = cholesteryl (9Z,12Z)-octadecadienoate(out). Involved in the transfer of neutral lipids, including cholesteryl ester and triglyceride, among lipoprotein particles. Allows the net movement of cholesteryl ester from high density lipoproteins/HDL to triglyceride-rich very low density lipoproteins/VLDL, and the equimolar transport of triglyceride from VLDL to HDL. Regulates the reverse cholesterol transport, by which excess cholesterol is removed from peripheral tissues and returned to the liver for elimination. This Gallus gallus (Chicken) protein is Cholesteryl ester transfer protein.